A 418-amino-acid polypeptide reads, in one-letter code: Thyroid hormone receptor alpha-B (418 aa).

Positions 1-40 are disordered; sequence MDQNLSGLDCLSEPDEKRWPDGKRKRKNSQCMGKSGMSGD. Residues 1-60 form a modulating region; it reads MDQNLSGLDCLSEPDEKRWPDGKRKRKNSQCMGKSGMSGDSLVSLPPAGYIPSYLDKDEP. 2 consecutive NR C4-type zinc fingers follow at residues 61–81 and 99–123; these read CVVCSDKATGYHYRCITCEGC and CKYDGCCIIDKITRNQCQLCRFKKC. A DNA-binding region (nuclear receptor) is located at residues 61 to 128; sequence CVVCSDKATG…RFKKCIAVGM (68 aa). Residues 171-415 enclose the NR LBD domain; that stretch reads EEWELIRIVT…PPLFLEVFED (245 aa).

Belongs to the nuclear hormone receptor family. NR1 subfamily. In terms of assembly, binds to thyroid hormone receptor element (TRE) weakly as homodimers and monomers, but binds TRE with much higher affinity as heterodimers with retinoid X receptors. Can bind DNA as a heterodimer with either rxra or rxrg.

The protein localises to the nucleus. Its function is as follows. High affinity receptor for triiodothyronine (T3). The sequence is that of Thyroid hormone receptor alpha-B (thra-b) from Xenopus laevis (African clawed frog).